Here is a 555-residue protein sequence, read N- to C-terminus: Phosphomethylpyrimidine synthase (555 aa).

A disordered region spans residues 78 to 104 (VRDRWGFDNGSAESTKGELSMSERKPR). Substrate-binding positions include N191, M220, Y249, H285, 305-307 (SRG), 346-349 (DALR), and E385. Zn(2+) is bound at residue H389. Position 412 (Y412) interacts with substrate. H453 lines the Zn(2+) pocket. The [4Fe-4S] cluster site is built by C535, C538, and C543.

It belongs to the ThiC family. The cofactor is [4Fe-4S] cluster.

It catalyses the reaction 5-amino-1-(5-phospho-beta-D-ribosyl)imidazole + S-adenosyl-L-methionine = 4-amino-2-methyl-5-(phosphooxymethyl)pyrimidine + CO + 5'-deoxyadenosine + formate + L-methionine + 3 H(+). It functions in the pathway cofactor biosynthesis; thiamine diphosphate biosynthesis. Its function is as follows. Catalyzes the synthesis of the hydroxymethylpyrimidine phosphate (HMP-P) moiety of thiamine from aminoimidazole ribotide (AIR) in a radical S-adenosyl-L-methionine (SAM)-dependent reaction. The polypeptide is Phosphomethylpyrimidine synthase (Chlorobaculum parvum (strain DSM 263 / NCIMB 8327) (Chlorobium vibrioforme subsp. thiosulfatophilum)).